The sequence spans 113 residues: Large ribosomal subunit protein uL22 (113 aa).

Belongs to the universal ribosomal protein uL22 family. Part of the 50S ribosomal subunit.

Functionally, this protein binds specifically to 23S rRNA; its binding is stimulated by other ribosomal proteins, e.g. L4, L17, and L20. It is important during the early stages of 50S assembly. It makes multiple contacts with different domains of the 23S rRNA in the assembled 50S subunit and ribosome. The globular domain of the protein is located near the polypeptide exit tunnel on the outside of the subunit, while an extended beta-hairpin is found that lines the wall of the exit tunnel in the center of the 70S ribosome. This is Large ribosomal subunit protein uL22 from Bacillus cytotoxicus (strain DSM 22905 / CIP 110041 / 391-98 / NVH 391-98).